A 200-amino-acid chain; its full sequence is Early E1A 21 kDa protein (200 aa).

A disordered region spans residues 78–98 (QDSTTATSAEEPSASTDSISS). The LXCXE motif, interaction with host RB1 signature appears at 114 to 118 (LRCYE). A zinc finger lies at 136–151 (CSTCGGHEVNGFCSLC). A Nuclear localization signal motif is present at residues 196–200 (SRHDE).

Interaction with host RB1 induces the aberrant dissociation of RB1-E2F1 complex thereby disrupting RB1's activity.

E1A protein has both transforming and trans-activating activities. Plays a role in viral genome replication by driving entry of quiescent cells into the cell cycle. Disrupts the function of host retinoblastoma protein RB1/pRb and isoform early E1A 26 kDa protein stabilizes TP53, which are key regulators of the cell cycle. Induces the disassembly of the E2F1 transcription factors from RB1 by direct competition for the same binding site on RB1, with subsequent transcriptional activation of E2F1-regulated S-phase genes. Inactivation of the ability of RB1 to arrest the cell cycle is critical for cellular transformation, uncontrolled cellular growth and proliferation induced by viral infection. Stimulation of progression from G1 to S phase allows the virus to efficiently use the cellular DNA replicating machinery to achieve viral genome replication. The sequence is that of Early E1A 21 kDa protein from Murine adenovirus A serotype 1 (MAdV-1).